The chain runs to 163 residues: NADH-quinone oxidoreductase subunit I (163 aa).

4Fe-4S ferredoxin-type domains are found at residues 54–84 (LRRYPNGEERCIACKLCEAVCPANAITIESE) and 94–123 (IVYDIDLFKCIFCGFCEEACPVDAIVETQI). [4Fe-4S] cluster contacts are provided by Cys-64, Cys-67, Cys-70, Cys-74, Cys-103, Cys-106, Cys-109, and Cys-113.

Belongs to the complex I 23 kDa subunit family. In terms of assembly, NDH-1 is composed of 14 different subunits. Subunits NuoA, H, J, K, L, M, N constitute the membrane sector of the complex. [4Fe-4S] cluster serves as cofactor.

It localises to the cell inner membrane. It catalyses the reaction a quinone + NADH + 5 H(+)(in) = a quinol + NAD(+) + 4 H(+)(out). Functionally, NDH-1 shuttles electrons from NADH, via FMN and iron-sulfur (Fe-S) centers, to quinones in the respiratory chain. The immediate electron acceptor for the enzyme in this species is believed to be ubiquinone. Couples the redox reaction to proton translocation (for every two electrons transferred, four hydrogen ions are translocated across the cytoplasmic membrane), and thus conserves the redox energy in a proton gradient. The protein is NADH-quinone oxidoreductase subunit I of Ruthia magnifica subsp. Calyptogena magnifica.